A 122-amino-acid chain; its full sequence is Cytochrome b-c1 complex subunit 7-2, mitochondrial (122 aa).

Belongs to the UQCRB/QCR7 family. Component of the ubiquinol-cytochrome c oxidoreductase (cytochrome b-c1 complex, complex III, CIII), a multisubunit enzyme composed of 10 subunits. The complex is composed of 3 respiratory subunits cytochrome b (MT-CYB), cytochrome c1 (CYC1-1 or CYC1-2) and Rieske protein (UCR1-1 or UCR1-2), 2 core protein subunits MPPalpha1 (or MPPalpha2) and MPPB, and 5 low-molecular weight protein subunits QCR7-1 (or QCR7-2), UCRQ-1 (or UCRQ-2), QCR9, UCRY and probably QCR6-1 (or QCR6-2). The complex exists as an obligatory dimer and forms supercomplexes (SCs) in the inner mitochondrial membrane with NADH-ubiquinone oxidoreductase (complex I, CI), resulting in different assemblies (supercomplexes SCI(1)III(2) and SCI(2)III(4)).

It localises to the mitochondrion inner membrane. Functionally, component of the ubiquinol-cytochrome c oxidoreductase, a multisubunit transmembrane complex that is part of the mitochondrial electron transport chain which drives oxidative phosphorylation. The respiratory chain contains 3 multisubunit complexes succinate dehydrogenase (complex II, CII), ubiquinol-cytochrome c oxidoreductase (cytochrome b-c1 complex, complex III, CIII) and cytochrome c oxidase (complex IV, CIV), that cooperate to transfer electrons derived from NADH and succinate to molecular oxygen, creating an electrochemical gradient over the inner membrane that drives transmembrane transport and the ATP synthase. The cytochrome b-c1 complex catalyzes electron transfer from ubiquinol to cytochrome c, linking this redox reaction to translocation of protons across the mitochondrial inner membrane, with protons being carried across the membrane as hydrogens on the quinol. In the process called Q cycle, 2 protons are consumed from the matrix, 4 protons are released into the intermembrane space and 2 electrons are passed to cytochrome c. The polypeptide is Cytochrome b-c1 complex subunit 7-2, mitochondrial (QCR7-2) (Arabidopsis thaliana (Mouse-ear cress)).